Reading from the N-terminus, the 369-residue chain is Arsenite methyltransferase (369 aa).

At Ser46 the chain carries Phosphoserine.

This sequence belongs to the methyltransferase superfamily. Arsenite methyltransferase family.

It localises to the cytoplasm. The protein resides in the cytosol. It carries out the reaction arsenic triglutathione + [thioredoxin]-dithiol + S-adenosyl-L-methionine + 2 H2O = methylarsonous acid + [thioredoxin]-disulfide + 3 glutathione + S-adenosyl-L-homocysteine + H(+). The catalysed reaction is arsenic triglutathione + 2 [thioredoxin]-dithiol + 2 S-adenosyl-L-methionine + H2O = dimethylarsinous acid + 2 [thioredoxin]-disulfide + 3 glutathione + 2 S-adenosyl-L-homocysteine + 2 H(+). It catalyses the reaction arsenic triglutathione + 3 [thioredoxin]-dithiol + 3 S-adenosyl-L-methionine = trimethylarsine + 3 [thioredoxin]-disulfide + 3 glutathione + 3 S-adenosyl-L-homocysteine + 3 H(+). Catalyzes the transfer of a methyl group from AdoMet to trivalent arsenicals producing methylated and dimethylated arsenicals. It methylates arsenite to form methylarsonate, Me-AsO(3)H(2), which is reduced by methylarsonate reductase to methylarsonite, Me-As(OH)2. Methylarsonite is also a substrate and it is converted into the much less toxic compound dimethylarsinate (cacodylate), Me(2)As(O)-OH. The sequence is that of Arsenite methyltransferase (As3mt) from Rattus norvegicus (Rat).